The following is a 178-amino-acid chain: Fatty-acid and retinol-binding protein 1 (178 aa).

The first 16 residues, 1-16, serve as a signal peptide directing secretion; the sequence is MYHQLILMALIGVIMA. N-linked (GlcNAc...) asparagine glycans are attached at residues Asn-44 and Asn-75. 2 coiled-coil regions span residues 67 to 89 and 122 to 154; these read DAALEALKNKSDKLYQKAVELRN and QKLDMEKLKQAARDIIAKYEALNEETKEELKAT. An N-linked (GlcNAc...) asparagine glycan is attached at Asn-157.

The protein belongs to the fatty-acid and retinol-binding protein (FARBP) family. In terms of processing, N-glycosylated.

It localises to the secreted. Functionally, binds retinol and different fatty acids. The protein is Fatty-acid and retinol-binding protein 1 of Onchocerca ochengi (Filarial nematode worm).